We begin with the raw amino-acid sequence, 467 residues long: Transcription factor fos-1 (467 aa).

Residues 1 to 22 (MFEQPSSTTNTTTSSGSGSDSN) are compositionally biased toward low complexity. 2 disordered regions span residues 1-38 (MFEQPSSTTNTTTSSGSGSDSNHYFELGPRNPINQAHP) and 139-179 (QYST…AAAR). Residues 163–226 (DDKRLKRRQR…NSLKNYLETH (64 aa)) enclose the bZIP domain. Positions 165–205 (KRLKRRQRNKEAAARCRQRRIDLMKELQDQVNDFKNSNDKK) are basic motif. The segment at 212–219 (IRNKLNSL) is leucine-zipper. Disordered stretches follow at residues 266–291 (RADSVPYSIRSGHSSSSSEQHSPVED) and 395–467 (QPIT…LRPL). Low complexity predominate over residues 273 to 286 (SIRSGHSSSSSEQH). Positions 434 to 454 (SSNTGLTPSGQPTMNFVSTPT) are enriched in polar residues. A phosphothreonine mark is found at Thr440, Thr452, and Thr454.

The protein belongs to the bZIP family. Fos subfamily. As to quaternary structure, homodimer. Heterodimer; with jun-1. Interacts with kgb-1 and hda-1. May be phosphorylated by kgb-1. Phosphorylation at Thr-440 increases sensitivity to heavy metal stress. Phosphorylation inhibits homodimer formation, and promotes association with target promoters. As to expression, expressed in anchor cells. Isoform a is expressed in somatic gonad cells that neighbor anchor cells. Isoform b is expressed in vulval cells, the uterine cells that neighbor anchor cells and the spermatheca.

The protein localises to the nucleus. Its function is as follows. Developmentally regulated transcription factor which binds and recognizes the enhancer DNA sequence 5'-TGA[CG]TCA-3'. Plays a role the development of the reproductive system, controlling events including anchor cell (AC) fusion and invasion. Regulates downstream transcriptional targets, including zmp-1, cdh-3, him-4 and mig10b, to promote the removal of the gonadal basement membrane during AC invasion. Regulates aff-1 expression to promote AC fusion. With jun-1 regulates egl-1 and lin-12 expression to allow uterine cell specification and development. In terms of biological role, required for ovulation. Controls plc-1 expression in the spermatheca to regulate spermathecal valve dilation. Acts with hda-1 as a downstream repressor of the kgb-1 mediated stress response pathway that transcriptionally represses genes involved in the response to heavy metals, such as kreg-1. The chain is Transcription factor fos-1 from Caenorhabditis elegans.